We begin with the raw amino-acid sequence, 239 residues long: Carboxy-S-adenosyl-L-methionine synthase (239 aa).

S-adenosyl-L-methionine is bound by residues Tyr-35, 64–66 (GCS), 88–89 (DN), and Arg-195.

Belongs to the class I-like SAM-binding methyltransferase superfamily. Cx-SAM synthase family. Homodimer.

It catalyses the reaction prephenate + S-adenosyl-L-methionine = carboxy-S-adenosyl-L-methionine + 3-phenylpyruvate + H2O. Catalyzes the conversion of S-adenosyl-L-methionine (SAM) to carboxy-S-adenosyl-L-methionine (Cx-SAM). This is Carboxy-S-adenosyl-L-methionine synthase from Helicobacter pylori (strain Shi470).